The chain runs to 440 residues: Chromosome partition protein MukF (440 aa).

The tract at residues 208-236 (LSETSGTLRELQDTLDAAGDKLQANLLRI) is leucine-zipper.

This sequence belongs to the MukF family. As to quaternary structure, interacts, and probably forms a ternary complex, with MukE and MukB via its C-terminal region. The complex formation is stimulated by calcium or magnesium. It is required for an interaction between MukE and MukB.

The protein localises to the cytoplasm. The protein resides in the nucleoid. Involved in chromosome condensation, segregation and cell cycle progression. May participate in facilitating chromosome segregation by condensation DNA from both sides of a centrally located replisome during cell division. Not required for mini-F plasmid partitioning. Probably acts via its interaction with MukB and MukE. Overexpression results in anucleate cells. It has a calcium binding activity. The polypeptide is Chromosome partition protein MukF (Klebsiella pneumoniae (strain 342)).